We begin with the raw amino-acid sequence, 104 residues long: Major pilu subunit operon regulatory protein PapB (104 aa).

The protein resides in the cytoplasm. Its function is as follows. May act as both positive and negative regulator of pap transcription. Might positively regulate levels of papI and/or mbf. Its autoregulatory mode of action involves differential binding to separate sites. The polypeptide is Major pilu subunit operon regulatory protein PapB (papB) (Escherichia coli).